A 470-amino-acid polypeptide reads, in one-letter code: Nuclear receptor subfamily 0 group B member 1 (470 aa).

3 tandem repeats follow at residues Met1–Cys67, Phe68–Cys133, and Phe134–Cys200. The interval Met1–Val253 is 4 X 67 AA tandem repeats. Short sequence motifs (LXXLL motif) lie at residues Leu13–Leu17, Leu80–Leu84, and Leu146–Leu150. The 4; truncated repeat unit spans residues Phe201–Val253. Residues Asp205–Lys469 enclose the NR LBD domain. Residues Met461–Leu466 carry the AF-2 motif motif.

The protein belongs to the nuclear hormone receptor family. NR0 subfamily. As to quaternary structure, homodimer. Interacts with NR5A1, NR5A2, NR0B2 and with COPS2. Interacts with ESRRB; represses ESRRB activity at the GATA6 promoter.

The protein localises to the nucleus. Its subcellular location is the cytoplasm. Functionally, nuclear receptor that lacks a DNA-binding domain and acts as a corepressor that inhibits the transcriptional activity of other nuclear receptors through heterodimeric interactions. Component of a cascade required for the development of the hypothalamic-pituitary-adrenal-gonadal axis. May also have a role in the development of the embryo and in the maintenance of embryonic stem cell pluripotency. The chain is Nuclear receptor subfamily 0 group B member 1 (NR0B1) from Callithrix jacchus (White-tufted-ear marmoset).